The sequence spans 490 residues: AP-5 complex subunit mu-1 (490 aa).

The region spanning 206–476 (KPQVSISITE…LISSDYYIWN (271 aa)) is the MHD domain.

This sequence belongs to the adaptor complexes medium subunit family. Probably part of the adaptor protein complex 5 (AP-5) a tetramer composed of AP5B1, AP5M1, AP5S1 and AP5Z1.

Its subcellular location is the cytoplasm. The protein resides in the cytosol. The protein localises to the late endosome membrane. It is found in the lysosome membrane. Its function is as follows. As part of AP-5, a probable fifth adaptor protein complex it may be involved in endosomal transport. In Macaca fascicularis (Crab-eating macaque), this protein is AP-5 complex subunit mu-1 (AP5M1).